A 416-amino-acid polypeptide reads, in one-letter code: Multifunctional CCA protein (416 aa).

2 residues coordinate ATP: Gly8 and Arg11. The CTP site is built by Gly8 and Arg11. The Mg(2+) site is built by Asp21 and Asp23. ATP-binding residues include Arg91, Arg138, and Arg141. 3 residues coordinate CTP: Arg91, Arg138, and Arg141. The 103-residue stretch at 229 to 331 (TGLHQELVSD…YELLQRCDAF (103 aa)) folds into the HD domain.

The protein belongs to the tRNA nucleotidyltransferase/poly(A) polymerase family. Bacterial CCA-adding enzyme type 1 subfamily. In terms of assembly, monomer. Can also form homodimers and oligomers. Mg(2+) is required as a cofactor. The cofactor is Ni(2+).

The enzyme catalyses a tRNA precursor + 2 CTP + ATP = a tRNA with a 3' CCA end + 3 diphosphate. The catalysed reaction is a tRNA with a 3' CCA end + 2 CTP + ATP = a tRNA with a 3' CCACCA end + 3 diphosphate. In terms of biological role, catalyzes the addition and repair of the essential 3'-terminal CCA sequence in tRNAs without using a nucleic acid template. Adds these three nucleotides in the order of C, C, and A to the tRNA nucleotide-73, using CTP and ATP as substrates and producing inorganic pyrophosphate. tRNA 3'-terminal CCA addition is required both for tRNA processing and repair. Also involved in tRNA surveillance by mediating tandem CCA addition to generate a CCACCA at the 3' terminus of unstable tRNAs. While stable tRNAs receive only 3'-terminal CCA, unstable tRNAs are marked with CCACCA and rapidly degraded. The protein is Multifunctional CCA protein of Xylella fastidiosa (strain M12).